A 310-amino-acid chain; its full sequence is Ribosome production factor 2 homolog (310 aa).

Residues 29–239 enclose the Brix domain; it reads KKTLILHGTK…VRRHRYPVES (211 aa). Residues 281 to 310 are disordered; that stretch reads LSNDVKGLKRERREAKKNKDHSKKQKINPE. Residues 295–310 are compositionally biased toward basic residues; sequence AKKNKDHSKKQKINPE.

The protein belongs to the RPF2 family.

The protein resides in the nucleus. It is found in the nucleolus. This Oryza sativa subsp. japonica (Rice) protein is Ribosome production factor 2 homolog.